The chain runs to 348 residues: Anthranilate phosphoribosyltransferase (348 aa).

5-phospho-alpha-D-ribose 1-diphosphate-binding positions include Gly84, Gly87–Asp88, Thr92, Asn94–Thr97, Lys112–Ser120, and Ser124. Anthranilate is bound at residue Gly84. Position 96 (Thr96) interacts with Mg(2+). Asn115 contributes to the anthranilate binding site. An anthranilate-binding site is contributed by Arg170. Residues Asp228 and Glu229 each coordinate Mg(2+).

Belongs to the anthranilate phosphoribosyltransferase family. Homodimer. The cofactor is Mg(2+).

The catalysed reaction is N-(5-phospho-beta-D-ribosyl)anthranilate + diphosphate = 5-phospho-alpha-D-ribose 1-diphosphate + anthranilate. The protein operates within amino-acid biosynthesis; L-tryptophan biosynthesis; L-tryptophan from chorismate: step 2/5. Catalyzes the transfer of the phosphoribosyl group of 5-phosphorylribose-1-pyrophosphate (PRPP) to anthranilate to yield N-(5'-phosphoribosyl)-anthranilate (PRA). This is Anthranilate phosphoribosyltransferase from Corynebacterium glutamicum (strain R).